A 332-amino-acid chain; its full sequence is Glyceraldehyde-3-phosphate dehydrogenase 1 (332 aa).

Residues 11–12 (RI), aspartate 33, and arginine 78 each bind NAD(+). D-glyceraldehyde 3-phosphate is bound by residues 149–151 (SCT), threonine 180, 209–210 (TG), and arginine 232. Cysteine 150 functions as the Nucleophile in the catalytic mechanism. NAD(+) is bound at residue asparagine 314.

The protein belongs to the glyceraldehyde-3-phosphate dehydrogenase family. In terms of assembly, homotetramer.

The protein resides in the cytoplasm. It catalyses the reaction D-glyceraldehyde 3-phosphate + phosphate + NAD(+) = (2R)-3-phospho-glyceroyl phosphate + NADH + H(+). It functions in the pathway carbohydrate degradation; glycolysis; pyruvate from D-glyceraldehyde 3-phosphate: step 1/5. This is Glyceraldehyde-3-phosphate dehydrogenase 1 (GPD1) from Candida glabrata (strain ATCC 2001 / BCRC 20586 / JCM 3761 / NBRC 0622 / NRRL Y-65 / CBS 138) (Yeast).